The sequence spans 566 residues: Proline--tRNA ligase (566 aa).

It belongs to the class-II aminoacyl-tRNA synthetase family. ProS type 1 subfamily. In terms of assembly, homodimer.

It localises to the cytoplasm. The catalysed reaction is tRNA(Pro) + L-proline + ATP = L-prolyl-tRNA(Pro) + AMP + diphosphate. Catalyzes the attachment of proline to tRNA(Pro) in a two-step reaction: proline is first activated by ATP to form Pro-AMP and then transferred to the acceptor end of tRNA(Pro). As ProRS can inadvertently accommodate and process non-cognate amino acids such as alanine and cysteine, to avoid such errors it has two additional distinct editing activities against alanine. One activity is designated as 'pretransfer' editing and involves the tRNA(Pro)-independent hydrolysis of activated Ala-AMP. The other activity is designated 'posttransfer' editing and involves deacylation of mischarged Ala-tRNA(Pro). The misacylated Cys-tRNA(Pro) is not edited by ProRS. The polypeptide is Proline--tRNA ligase (Coxiella burnetii (strain RSA 493 / Nine Mile phase I)).